We begin with the raw amino-acid sequence, 325 residues long: MSLQSRLSGRLAQLRAAGQLLVPPRPRPGHLAGATRTRSSTCGPPAFLGVFGRRARTSAGVGAWGAAAVGRTAGVRTWAPLAMAAKVDLSTSTDWKEAKSFLKGLSDKQREEHYFCKDFVRLKKIPTWKEMAKGVAVKVEEPRYKKDKQLNEKISLLRSDITKLEVDAIVNAANSSLLGGGGVDGCIHRAAGPLLTDECRTLQSCKTGKAKITGGYRLPAKYVIHTVGPIAYGEPSASQAAELRSCYLSSLDLLLEHRLRSVAFPCISTGVFGYPCEAAAEIVLATLREWLEQHKDKVDRLIICVFLEKDEDIYRSRLPHYFPVA.

N6-succinyllysine occurs at positions 96, 103, and 129. Lys-138 is covalently cross-linked (Glycyl lysine isopeptide (Lys-Gly) (interchain with G-Cter in SUMO2)). One can recognise a Macro domain in the interval 141–322; that stretch reads EPRYKKDKQL…IYRSRLPHYF (182 aa). 159–161 is a binding site for substrate; that stretch reads SDI. Residue Lys-163 is modified to N6-acetyllysine. Substrate contacts are provided by residues 172-174, 179-184, 267-273, and Phe-306; these read AAN, GGGGVD, and ISTGVFG.

It belongs to the MacroD-type family. MacroD1/2-like subfamily. In terms of assembly, interacts with ESR1; Interacts in a manner that is estrogen independent but is enhanced by estrogen. Interacts (via macro domain) with AR.

It is found in the nucleus. The catalysed reaction is 3''-O-acetyl-ADP-D-ribose + H2O = ADP-D-ribose + acetate + H(+). It catalyses the reaction 2''-O-acetyl-ADP-D-ribose + H2O = ADP-D-ribose + acetate + H(+). The enzyme catalyses 4-O-(ADP-D-ribosyl)-L-aspartyl-[protein] + H2O = L-aspartyl-[protein] + ADP-D-ribose + H(+). It carries out the reaction 5-O-(ADP-D-ribosyl)-L-glutamyl-[protein] + H2O = L-glutamyl-[protein] + ADP-D-ribose + H(+). The catalysed reaction is alpha-NAD(+) + H2O = ADP-D-ribose + nicotinamide + H(+). Its activity is regulated as follows. Subject to competitive inhibition by the product ADP-ribose. Its function is as follows. Removes ADP-ribose from aspartate and glutamate residues in proteins bearing a single ADP-ribose moiety. Inactive towards proteins bearing poly-ADP-ribose. Deacetylates O-acetyl-ADP ribose, a signaling molecule generated by the deacetylation of acetylated lysine residues in histones and other proteins. Plays a role in estrogen signaling. Binds to androgen receptor (AR) and amplifies the transactivation function of AR in response to androgen. May play an important role in carcinogenesis and/or progression of hormone-dependent cancers by feed-forward mechanism that activates ESR1 transactivation. Could be an ESR1 coactivator, providing a positive feedback regulatory loop for ESR1 signal transduction. Could be involved in invasive growth by down-regulating CDH1 in endometrial cancer cells. Enhances ESR1-mediated transcription activity. The protein is ADP-ribose glycohydrolase MACROD1 of Homo sapiens (Human).